We begin with the raw amino-acid sequence, 21 residues long: Thanatin (21 aa).

Cys-11 and Cys-18 form a disulfide bridge.

The protein resides in the secreted. In terms of biological role, insect defense peptide with a broad spectrum of activity against Gram-positive and Gram-negative bacteria and fungi. No activity against S.aureus. Stops respiration in bacteria but does not permeabilize their inner membranes. The chain is Thanatin from Podisus maculiventris (Spined soldier bug).